A 98-amino-acid polypeptide reads, in one-letter code: NADH-ubiquinone oxidoreductase chain 4L (98 aa).

3 consecutive transmembrane segments (helical) span residues 1–21, 29–49, and 61–81; these read MPIIYMNITLAFIISLLGMLV, SLLCLEGMMLSLFMMSTLMAL, and IALLVFAACEAAVGLALLVSI.

The protein belongs to the complex I subunit 4L family. Core subunit of respiratory chain NADH dehydrogenase (Complex I) which is composed of 45 different subunits.

The protein localises to the mitochondrion inner membrane. It catalyses the reaction a ubiquinone + NADH + 5 H(+)(in) = a ubiquinol + NAD(+) + 4 H(+)(out). Functionally, core subunit of the mitochondrial membrane respiratory chain NADH dehydrogenase (Complex I) which catalyzes electron transfer from NADH through the respiratory chain, using ubiquinone as an electron acceptor. Part of the enzyme membrane arm which is embedded in the lipid bilayer and involved in proton translocation. The polypeptide is NADH-ubiquinone oxidoreductase chain 4L (MT-ND4L) (Piliocolobus badius (Western red colobus)).